The following is a 247-amino-acid chain: ATP synthase subunit a (247 aa).

Transmembrane regions (helical) follow at residues 24 to 44 (IAFTNSSAYMLVAVVLTSLLM), 82 to 102 (FFPFVFTIFMLVTVSNLVGIV), 112 to 132 (IIVTAALAFLVFFTVLIYGFY), 141 to 161 (LFVPSGIPIVILPLVVAIEVI), 194 to 214 (MLGAMGIVGVFGAVLPLALVV), and 219 to 239 (LELLVAFLQAYVFTILTCIYI).

Belongs to the ATPase A chain family. In terms of assembly, F-type ATPases have 2 components, CF(1) - the catalytic core - and CF(0) - the membrane proton channel. CF(1) has five subunits: alpha(3), beta(3), gamma(1), delta(1), epsilon(1). CF(0) has three main subunits: a(1), b(2) and c(9-12). The alpha and beta chains form an alternating ring which encloses part of the gamma chain. CF(1) is attached to CF(0) by a central stalk formed by the gamma and epsilon chains, while a peripheral stalk is formed by the delta and b chains.

The protein localises to the cell inner membrane. In terms of biological role, key component of the proton channel; it plays a direct role in the translocation of protons across the membrane. This is ATP synthase subunit a from Nitrobacter hamburgensis (strain DSM 10229 / NCIMB 13809 / X14).